An 800-amino-acid polypeptide reads, in one-letter code: DNA mismatch repair protein MutS (800 aa).

Residue 616 to 623 (GPNMGGKS) participates in ATP binding.

It belongs to the DNA mismatch repair MutS family.

Its function is as follows. This protein is involved in the repair of mismatches in DNA. It is possible that it carries out the mismatch recognition step. This protein has a weak ATPase activity. This chain is DNA mismatch repair protein MutS, found in Buchnera aphidicola subsp. Baizongia pistaciae (strain Bp).